An 88-amino-acid polypeptide reads, in one-letter code: Protein transport protein Sec61 subunit beta (88 aa).

The tract at residues 1 to 41 (MDSSVPGGQRTLQKRRNAQLQKEKKANQTPASPRQAGFGGS) is disordered. The Cytoplasmic portion of the chain corresponds to 1–60 (MDSSVPGGQRTLQKRRNAQLQKEKKANQTPASPRQAGFGGSSSSILKLYTDEANGLRVDP). The chain crosses the membrane as a helical span at residues 61 to 81 (LVVLFLAVAFVFSVVALHVVA).

The protein belongs to the SEC61-beta family. In terms of assembly, heterotrimeric complex composed of SEC61, SEB1 and SSS1.

It localises to the endoplasmic reticulum membrane. Its function is as follows. Necessary for protein translocation in the endoplasmic reticulum. This Kluyveromyces lactis (strain ATCC 8585 / CBS 2359 / DSM 70799 / NBRC 1267 / NRRL Y-1140 / WM37) (Yeast) protein is Protein transport protein Sec61 subunit beta (SBH1).